A 388-amino-acid polypeptide reads, in one-letter code: Galactokinase (388 aa).

33–36 serves as a coordination point for substrate; sequence EHTD. ATP contacts are provided by residues Ser-67 and 124-130; that span reads GAGLSSS. Positions 130 and 162 each coordinate Mg(2+). The Proton acceptor role is filled by Asp-174. Tyr-224 serves as a coordination point for substrate.

This sequence belongs to the GHMP kinase family. GalK subfamily.

It localises to the cytoplasm. The catalysed reaction is alpha-D-galactose + ATP = alpha-D-galactose 1-phosphate + ADP + H(+). Its pathway is carbohydrate metabolism; galactose metabolism. In terms of biological role, catalyzes the transfer of the gamma-phosphate of ATP to D-galactose to form alpha-D-galactose-1-phosphate (Gal-1-P). This Lacticaseibacillus casei (strain BL23) (Lactobacillus casei) protein is Galactokinase.